The primary structure comprises 1241 residues: ATP-dependent helicase/nuclease subunit A (1241 aa).

Residues 12–485 form the UvrD-like helicase ATP-binding domain; it reads SQWTDDQWKA…IDLAKNFRSR (474 aa). 33–40 provides a ligand contact to ATP; sequence AAAGSGKT. Residues 505–805 form the UvrD-like helicase C-terminal domain; it reads GEIDYDADAE…RIMTIHKSKG (301 aa).

The protein belongs to the helicase family. AddA subfamily. Heterodimer of AddA and AddB/RexB. Mg(2+) serves as cofactor.

The catalysed reaction is Couples ATP hydrolysis with the unwinding of duplex DNA by translocating in the 3'-5' direction.. The enzyme catalyses ATP + H2O = ADP + phosphate + H(+). In terms of biological role, the heterodimer acts as both an ATP-dependent DNA helicase and an ATP-dependent, dual-direction single-stranded exonuclease. Recognizes the chi site generating a DNA molecule suitable for the initiation of homologous recombination. The AddA nuclease domain is required for chi fragment generation; this subunit has the helicase and 3' -&gt; 5' nuclease activities. The polypeptide is ATP-dependent helicase/nuclease subunit A (Bacillus cereus (strain AH187)).